A 324-amino-acid chain; its full sequence is Carbamate kinase (324 aa).

Belongs to the carbamate kinase family.

It is found in the cytoplasm. The catalysed reaction is hydrogencarbonate + NH4(+) + ATP = carbamoyl phosphate + ADP + H2O + H(+). It participates in amino-acid degradation; L-arginine degradation via ADI pathway. In Rhizobium meliloti (strain 1021) (Ensifer meliloti), this protein is Carbamate kinase.